The sequence spans 130 residues: Succinate dehydrogenase cytochrome b556 subunit (130 aa).

The Cytoplasmic segment spans residues 1–26 (MADVNRGNRPLSPHLQVYRLPLAAIT). Residues 27 to 52 (SIMTRITGHALVAGIVLITWWLVAAV) traverse the membrane as a helical segment. The Periplasmic portion of the chain corresponds to 53–68 (TSPGAFACADWVVRSW). Residues 69–89 (LGFIILTGSMWALWYHLLAGL) form a helical membrane-spanning segment. A heme-binding site is contributed by His84. Residues 90–109 (RHLFYDAGYGLEIEQAHKSS) are Cytoplasmic-facing. A helical transmembrane segment spans residues 110–130 (QALIAGSVVLAVLTLIVFFVF).

This sequence belongs to the cytochrome b560 family. Part of an enzyme complex containing four subunits: a flavoprotein, an iron-sulfur protein, plus two membrane-anchoring proteins, SdhC and SdhD. The complex can form homotrimers. Requires heme as cofactor.

Its subcellular location is the cell inner membrane. Its pathway is carbohydrate metabolism; tricarboxylic acid cycle. Functionally, membrane-anchoring subunit of succinate dehydrogenase (SDH). The chain is Succinate dehydrogenase cytochrome b556 subunit (sdhC) from Paracoccus denitrificans.